A 236-amino-acid polypeptide reads, in one-letter code: Biosynthetic peptidoglycan transglycosylase (236 aa).

A helical transmembrane segment spans residues 12-31 (ALLWFVAGSIVLVLVFRWVP).

Belongs to the glycosyltransferase 51 family.

The protein localises to the cell inner membrane. It catalyses the reaction [GlcNAc-(1-&gt;4)-Mur2Ac(oyl-L-Ala-gamma-D-Glu-L-Lys-D-Ala-D-Ala)](n)-di-trans,octa-cis-undecaprenyl diphosphate + beta-D-GlcNAc-(1-&gt;4)-Mur2Ac(oyl-L-Ala-gamma-D-Glu-L-Lys-D-Ala-D-Ala)-di-trans,octa-cis-undecaprenyl diphosphate = [GlcNAc-(1-&gt;4)-Mur2Ac(oyl-L-Ala-gamma-D-Glu-L-Lys-D-Ala-D-Ala)](n+1)-di-trans,octa-cis-undecaprenyl diphosphate + di-trans,octa-cis-undecaprenyl diphosphate + H(+). It functions in the pathway cell wall biogenesis; peptidoglycan biosynthesis. Peptidoglycan polymerase that catalyzes glycan chain elongation from lipid-linked precursors. This Pseudomonas putida (strain ATCC 47054 / DSM 6125 / CFBP 8728 / NCIMB 11950 / KT2440) protein is Biosynthetic peptidoglycan transglycosylase.